A 559-amino-acid polypeptide reads, in one-letter code: Berberine bridge enzyme-like A (559 aa).

An N-terminal signal peptide occupies residues M1–G21. N-linked (GlcNAc...) asparagine glycans are attached at residues N25 and N37. A disulfide bridge connects residues C29 and C86. An FAD-binding PCMH-type domain is found at F64–V240. The residue at position 101 (H101) is a Pros-8alpha-FAD histidine. N321, N355, and N494 each carry an N-linked (GlcNAc...) asparagine glycan.

The protein belongs to the oxygen-dependent FAD-linked oxidoreductase family. FAD serves as cofactor. As to expression, mostly expressed in roots.

The protein resides in the vacuole. Its pathway is alkaloid biosynthesis; nicotine biosynthesis. Involved in the biosynthesis of pyridine alkaloid natural products, leading mainly to the production of anabasine, anatabine, nicotine and nornicotine, effective deterrents against herbivores with antiparasitic and pesticide properties (neurotoxins); nornicotine serves as the precursor in the synthesis of the carcinogen compound N'-nitrosonornicotine (NNN). Catalyzes a late oxidation step subsequent to the pyridine ring condensation reaction in the biosynthesis of alkaloids. This Nicotiana tabacum (Common tobacco) protein is Berberine bridge enzyme-like A.